Reading from the N-terminus, the 128-residue chain is Mini-ribonuclease 3 (128 aa).

Residue D17 is part of the active site.

The protein belongs to the MrnC RNase family. In terms of assembly, homodimer. It depends on Mg(2+) as a cofactor.

The protein resides in the cytoplasm. Functionally, involved in correct processing of both the 5' and 3' ends of 23S rRNA precursor. Processes 30S rRNA precursor transcript even in absence of ribonuclease 3 (Rnc); Rnc processes 30S rRNA into smaller rRNA precursors. The sequence is that of Mini-ribonuclease 3 from Streptococcus pneumoniae (strain ATCC BAA-255 / R6).